The primary structure comprises 220 residues: Flavin-dependent thymidylate synthase (220 aa).

The ThyX domain occupies 1–208; that stretch reads MKIDILDKGF…PWTFEAFLKY (208 aa). Residues Thr55, 78–80, and Glu86 contribute to the FAD site; that span reads RHR. Residues 75 to 78, 86 to 90, and Arg147 contribute to the dUMP site; these read QWFR and ELSGR. The ThyX motif motif lies at 78–88; sequence RHRIASYNELS. FAD-binding positions include 163–165 and Asn169; that span reads NAR. A dUMP-binding site is contributed by Arg174. Arg174 functions as the Involved in ionization of N3 of dUMP, leading to its activation in the catalytic mechanism.

The protein belongs to the thymidylate synthase ThyX family. In terms of assembly, homotetramer. The cofactor is FAD.

It carries out the reaction dUMP + (6R)-5,10-methylene-5,6,7,8-tetrahydrofolate + NADPH + H(+) = dTMP + (6S)-5,6,7,8-tetrahydrofolate + NADP(+). It participates in pyrimidine metabolism; dTTP biosynthesis. Functionally, catalyzes the reductive methylation of 2'-deoxyuridine-5'-monophosphate (dUMP) to 2'-deoxythymidine-5'-monophosphate (dTMP) while utilizing 5,10-methylenetetrahydrofolate (mTHF) as the methyl donor, and NADPH and FADH(2) as the reductant. The polypeptide is Flavin-dependent thymidylate synthase (Thermotoga petrophila (strain ATCC BAA-488 / DSM 13995 / JCM 10881 / RKU-1)).